Here is a 563-residue protein sequence, read N- to C-terminus: Pyruvate decarboxylase (563 aa).

Pyruvate-binding residues include Asp28 and His115. Thiamine diphosphate is bound by residues Thr390 and 413–415; that span reads GSI. Asp444 provides a ligand contact to Mg(2+). Residues 445–446 and 471–476 contribute to the thiamine diphosphate site; these read GS and NDGYTI. The Mg(2+) site is built by Asn471 and Gly473. Position 477 (Glu477) interacts with pyruvate.

Belongs to the TPP enzyme family. Homotetramer. Requires Mg(2+) as cofactor. The cofactor is thiamine diphosphate.

It carries out the reaction a 2-oxocarboxylate + H(+) = an aldehyde + CO2. The enzyme catalyses pyruvate + H(+) = acetaldehyde + CO2. The protein is Pyruvate decarboxylase (PDC1) of Kluyveromyces lactis (strain ATCC 8585 / CBS 2359 / DSM 70799 / NBRC 1267 / NRRL Y-1140 / WM37) (Yeast).